Here is a 1433-residue protein sequence, read N- to C-terminus: DNA-directed RNA polymerase subunit beta' (1433 aa).

Positions 66, 68, 81, and 84 each coordinate Zn(2+). 3 residues coordinate Mg(2+): Asp-473, Asp-475, and Asp-477. Zn(2+)-binding residues include Cys-815, Cys-889, Cys-896, and Cys-899.

It belongs to the RNA polymerase beta' chain family. In terms of assembly, the RNAP catalytic core consists of 2 alpha, 1 beta, 1 beta' and 1 omega subunit. When a sigma factor is associated with the core the holoenzyme is formed, which can initiate transcription. Mg(2+) serves as cofactor. Requires Zn(2+) as cofactor.

The enzyme catalyses RNA(n) + a ribonucleoside 5'-triphosphate = RNA(n+1) + diphosphate. In terms of biological role, DNA-dependent RNA polymerase catalyzes the transcription of DNA into RNA using the four ribonucleoside triphosphates as substrates. The sequence is that of DNA-directed RNA polymerase subunit beta' from Porphyromonas gingivalis (strain ATCC BAA-308 / W83).